A 256-amino-acid chain; its full sequence is Cell division protein DivIB (256 aa).

The Cytoplasmic segment spans residues 1-23; sequence MSKDLISTDEYIKIKKKRKRIKK. The helical transmembrane segment at 24-44 threads the bilayer; the sequence is IVVLFIFLISILVTLCLKIPY. A POTRA domain is found at 45–113; it reads FNIESIEIKG…NKLEIYVKER (69 aa). At 45–256 the chain is on the extracellular side; it reads FNIESIEIKG…EGNPVFYIEK (212 aa).

The protein belongs to the FtsQ/DivIB family. DivIB subfamily.

The protein localises to the cell membrane. Its function is as follows. Cell division protein that may be involved in stabilizing or promoting the assembly of the division complex. The chain is Cell division protein DivIB from Clostridium botulinum (strain Loch Maree / Type A3).